A 191-amino-acid chain; its full sequence is Large ribosomal subunit protein bL9 (191 aa).

Residues 149-191 are disordered; sequence EEAERQSKGESLTSADAIYGVDEDALRPEDFFDPEADGNEDDE. The span at 179–191 shows a compositional bias: acidic residues; sequence FFDPEADGNEDDE.

It belongs to the bacterial ribosomal protein bL9 family.

Functionally, binds to the 23S rRNA. This chain is Large ribosomal subunit protein bL9 (rplI), found in Agrobacterium fabrum (strain C58 / ATCC 33970) (Agrobacterium tumefaciens (strain C58)).